A 510-amino-acid polypeptide reads, in one-letter code: MNTTETSRAAAPLVLILGLGETGVAAARWYARQGSPLRVTDSRAQPGGLAALQAALADATVEYRLGCGEQFPPDLLDGVAQIVLSPGLVPHESPTRELLEQARERNVEVVGEIELFARALAGLAESREYRPRVLAITGTNGKTTVTALTRQLIEAGGMSARAAGNISPAALAALMDALDQDDLPQVWVLELSSFQLETTRTLAPDAAVVLNVTQDHLDWHGDMQAYAQAKARILKPARLAIVNRDDPLAVAMVESLQALNVRSFGRDVPALVGDMGLELGQGVAWLTACESNDFDEPAPAPRRKKDAPPPTRAGGRMSRLMPVDALRIRGVHNALNALAAMQLARSLDLGWGPMLRTLRDYAGEPHRAELVRSIGDVDYINDSKGTNVGATVAALEGLGQQVVLIAGGQGKGQDFSPLVPVVRRHARAVVLIGVDGAAIGKVLEPTGVPCAAAADMREAVRRAAELAQPGDAVLLSPACASFDMFRNYPHRGEVFAAEVRELALDRGEVA.

138–144 (GTNGKTT) contributes to the ATP binding site. The segment at 294–316 (FDEPAPAPRRKKDAPPPTRAGGR) is disordered.

The protein belongs to the MurCDEF family.

The protein localises to the cytoplasm. The enzyme catalyses UDP-N-acetyl-alpha-D-muramoyl-L-alanine + D-glutamate + ATP = UDP-N-acetyl-alpha-D-muramoyl-L-alanyl-D-glutamate + ADP + phosphate + H(+). It participates in cell wall biogenesis; peptidoglycan biosynthesis. Functionally, cell wall formation. Catalyzes the addition of glutamate to the nucleotide precursor UDP-N-acetylmuramoyl-L-alanine (UMA). The sequence is that of UDP-N-acetylmuramoylalanine--D-glutamate ligase from Bordetella pertussis (strain Tohama I / ATCC BAA-589 / NCTC 13251).